Consider the following 85-residue polypeptide: Small ribosomal subunit protein bS16 (85 aa).

It belongs to the bacterial ribosomal protein bS16 family.

This chain is Small ribosomal subunit protein bS16, found in Clostridium kluyveri (strain NBRC 12016).